Reading from the N-terminus, the 438-residue chain is Adenylosuccinate synthetase (438 aa).

Residues 13–19 (GDEGKGK) and 41–43 (GHT) contribute to the GTP site. The active-site Proton acceptor is the Asp-14. Mg(2+) is bound by residues Asp-14 and Gly-41. IMP is bound by residues 14–17 (DEGK), 39–42 (NAGH), Thr-130, Arg-144, Gln-225, Thr-240, and Arg-312. The active-site Proton donor is the His-42. A substrate-binding site is contributed by 308 to 314 (ATTGRQR). Residues Arg-314, 340–342 (KLD), and 422–424 (STG) each bind GTP.

Belongs to the adenylosuccinate synthetase family. Homodimer. Mg(2+) is required as a cofactor.

It is found in the cytoplasm. It carries out the reaction IMP + L-aspartate + GTP = N(6)-(1,2-dicarboxyethyl)-AMP + GDP + phosphate + 2 H(+). Its pathway is purine metabolism; AMP biosynthesis via de novo pathway; AMP from IMP: step 1/2. Its function is as follows. Plays an important role in the de novo pathway of purine nucleotide biosynthesis. Catalyzes the first committed step in the biosynthesis of AMP from IMP. The protein is Adenylosuccinate synthetase of Vesicomyosocius okutanii subsp. Calyptogena okutanii (strain HA).